Reading from the N-terminus, the 501-residue chain is Cystine/glutamate transporter (501 aa).

The Cytoplasmic segment spans residues 1 to 43 (MVRKPVVSTISKGGYLQGNVNGRLPSLGNKEPPGQEKVQLKRK). Residue Ser26 is modified to Phosphoserine. A helical membrane pass occupies residues 44-64 (VTLLRGVSIIIGTIIGAGIFI). Residues 65-74 (SPKGVLQNTG) are Extracellular-facing. The helical transmembrane segment at 75–95 (SVGMSLTIWTVCGVLSLFGAL) threads the bilayer. The Cytoplasmic segment spans residues 96–101 (SYAELG). Residues 102-116 (TTIKKSGGHYTYILE) lie within the membrane without spanning it. The Cytoplasmic segment spans residues 117–130 (VFGPLPAFVRVWVE). A helical membrane pass occupies residues 131-150 (LLIIRPAATAVISLAFGRYI). Residue Arg135 participates in L-glutamate binding. Topologically, residues 151–163 (LEPFFIQCEIPEL) are extracellular. Residues 164 to 179 (AIKLITAVGITVVMVL) form a helical membrane-spanning segment. Over 180 to 193 (NSMSVSWSARIQIF) the chain is Cytoplasmic. A helical membrane pass occupies residues 194-210 (LTFCKLTAILIIIVPGV). Residues 211–234 (MQLIKGQTQNFKDAFSGRDSSITR) lie on the Extracellular side of the membrane. The helical transmembrane segment at 235-255 (LPLAFYYGMYAYAGWFYLNFV) threads the bilayer. Tyr244 contacts L-glutamate. At 256-265 (TEEVENPEKT) the chain is on the cytoplasmic side. Residues 266-286 (IPLAICISMAIVTIGYVLTNV) traverse the membrane as a helical segment. At 287-317 (AYFTTINAEELLLSNAVAVTFSERLLGNFSL) the chain is on the extracellular side. Asn314 carries N-linked (GlcNAc...) asparagine glycosylation. The helical transmembrane segment at 318–338 (AVPIFVALSCFGSMNGGVFAV) threads the bilayer. Residues 339–364 (SRLFYVASREGHLPEILSMIHVRKHT) are Cytoplasmic-facing. The helical transmembrane segment at 365 to 385 (PLPAVIVLHPLTMIMLFSGDL) threads the bilayer. The Extracellular segment spans residues 386 to 387 (DS). A helical transmembrane segment spans residues 388-408 (LLNFLSFARWLFIGLAVAGLI). The Cytoplasmic portion of the chain corresponds to 409–422 (YLRYKCPDMHRPFK). The helical transmembrane segment at 423–443 (VPLFIPALFSFTCLFMVALSL) threads the bilayer. The Extracellular segment spans residues 444–449 (YSDPFS). The helical transmembrane segment at 450–470 (TGIGFVITLTGVPAYYLFIIW) threads the bilayer. Residues 471–501 (DKKPRWFRIMSEKITRTLQIILEVVPEEDKL) are Cytoplasmic-facing.

This sequence belongs to the amino acid-polyamine-organocation (APC) superfamily. L-type amino acid transporter (LAT) (TC 2.A.3.8) family. As to quaternary structure, disulfide-linked heterodimer with the amino acid transport protein SLC3A2/4F2hc; this interaction mediates cell membrane localization. Ubiquitinated by TRIM26; leading to proteasomal degradation. As to expression, expressed in term placenta and primary term cytotrophoblast. Expressed mainly in the brain, but also in pancreas.

It localises to the cell membrane. The protein localises to the cell projection. Its subcellular location is the microvillus membrane. It carries out the reaction L-cystine(out) + L-glutamate(in) = L-cystine(in) + L-glutamate(out). The catalysed reaction is an L-alpha-amino acid(in) + L-kynurenine(out) = an L-alpha-amino acid(out) + L-kynurenine(in). The enzyme catalyses N-acetyl-L-cysteine(out) + L-glutamate(in) = N-acetyl-L-cysteine(in) + L-glutamate(out). Inhibited by erastin and sulfasalazine. Inhibited by (S)-lactate. Inactivated by p-chloromercuribenzoic acid and p-chloromercuribenzenesulfonic acid. In terms of biological role, heterodimer with SLC3A2, that functions as an antiporter by mediating the exchange of extracellular anionic L-cystine and intracellular L-glutamate across the cellular plasma membrane. Provides L-cystine for the maintenance of the redox balance between extracellular L-cystine and L-cysteine and for the maintenance of the intracellular levels of glutathione that is essential for cells protection from oxidative stress. The transport is sodium-independent, electroneutral with a stoichiometry of 1:1, and is drove by the high intracellular concentration of L-glutamate and the intracellular reduction of L-cystine. In addition, mediates the import of L-kynurenine leading to anti-ferroptotic signaling propagation required to maintain L-cystine and glutathione homeostasis. Moreover, mediates N-acetyl-L-cysteine uptake into the placenta leading to subsequently down-regulation of pathways associated with oxidative stress, inflammation and apoptosis. In vitro can also transport L-aspartate. May participate in astrocyte and meningeal cell proliferation during development and can provide neuroprotection by promoting glutathione synthesis and delivery from non-neuronal cells such as astrocytes and meningeal cells to immature neurons. Controls the production of pheomelanin pigment directly. This Homo sapiens (Human) protein is Cystine/glutamate transporter.